A 401-amino-acid chain; its full sequence is Splicing factor 45 (401 aa).

Residue Ser-2 is modified to N-acetylserine. Ser-2 carries the post-translational modification Phosphoserine. Residue Lys-15 forms a Glycyl lysine isopeptide (Lys-Gly) (interchain with G-Cter in SUMO2) linkage. Lys-21 carries the post-translational modification N6-acetyllysine. Glycyl lysine isopeptide (Lys-Gly) (interchain with G-Cter in SUMO2) cross-links involve residues Lys-24 and Lys-33. Lys-41 is modified (N6-acetyllysine; alternate). A Glycyl lysine isopeptide (Lys-Gly) (interchain with G-Cter in SUMO2); alternate cross-link involves residue Lys-41. The span at 57 to 68 shows a compositional bias: basic and acidic residues; the sequence is LKRGGSSDDRQI. Disordered regions lie at residues 57-84 and 114-233; these read LKRGGSSDDRQIVDTPPHVAAGLKDPVP and RQRE…FLAN. Lys-58 participates in a covalent cross-link: Glycyl lysine isopeptide (Lys-Gly) (interchain with G-Cter in SUMO2). Phosphothreonine is present on Thr-71. A compositionally biased stretch (basic and acidic residues) spans 114–153; it reads RQREERQRQRELERQKEIEEREKRRKDRHEASGFARRPDP. A phosphoserine mark is found at Ser-155 and Ser-169. A compositionally biased stretch (basic and acidic residues) spans 182 to 200; it reads VEKDKELPRDFPYEEDSRP. At Ser-222 the chain carries Phosphoserine. The G-patch domain maps to 235-283; that stretch reads GGTVAHKIMQKYGFREGQGLGKHEQGLSTALSVEKTSKRGGKIIVGDAT. Thr-237 is subject to Phosphothreonine. Lys-256 is covalently cross-linked (Glycyl lysine isopeptide (Lys-Gly) (interchain with G-Cter in SUMO2)). The residue at position 266 (Ser-266) is a Phosphoserine. Lys-276 participates in a covalent cross-link: Glycyl lysine isopeptide (Lys-Gly) (interchain with G-Cter in SUMO2). 2 positions are modified to phosphoserine: Ser-291 and Ser-293. An RRM domain is found at 306 to 385; sequence VVLLRNMVGA…YFGGRVVKAC (80 aa).

In terms of assembly, binds SXL. Associates with the spliceosome. Interacts with SF3B1, SF1 and U2AF2.

It localises to the nucleus. Splice factor that binds to the single-stranded 3'AG at the exon/intron border and promotes its utilization in the second catalytic step. Involved in the regulation of alternative splicing and the utilization of cryptic splice sites. Promotes the utilization of a cryptic splice site created by the beta-110 mutation in the HBB gene. The resulting frameshift leads to sickle cell anemia. The polypeptide is Splicing factor 45 (RBM17) (Homo sapiens (Human)).